Here is a 263-residue protein sequence, read N- to C-terminus: 4-hydroxy-2-oxo-heptane-1,7-dioate aldolase (263 aa).

Residue His45 is the Proton acceptor of the active site. Gln147 provides a ligand contact to substrate. Position 149 (Glu149) interacts with a divalent metal cation. Ala174 and Asp175 together coordinate substrate. Asp175 contacts a divalent metal cation.

It belongs to the HpcH/HpaI aldolase family. In terms of assembly, homohexamer; trimer of dimers. A divalent metal cation serves as cofactor.

It carries out the reaction 4-hydroxy-2-oxoheptanedioate = succinate semialdehyde + pyruvate. The protein operates within aromatic compound metabolism; 4-hydroxyphenylacetate degradation; pyruvate and succinate semialdehyde from 4-hydroxyphenylacetate: step 7/7. In terms of biological role, catalyzes the reversible retro-aldol cleavage of 4-hydroxy-2-ketoheptane-1,7-dioate (HKHD) to pyruvate and succinic semialdehyde. This is 4-hydroxy-2-oxo-heptane-1,7-dioate aldolase from Salmonella choleraesuis (strain SC-B67).